A 365-amino-acid chain; its full sequence is 3-dehydroquinate synthase (365 aa).

NAD(+)-binding positions include 69–74 (DGEKYK), 103–107 (GVIGD), 127–128 (TT), lysine 140, and lysine 149. Zn(2+) is bound by residues glutamate 182, histidine 245, and histidine 262.

Belongs to the sugar phosphate cyclases superfamily. Dehydroquinate synthase family. The cofactor is Co(2+). Zn(2+) serves as cofactor. Requires NAD(+) as cofactor.

The protein resides in the cytoplasm. The catalysed reaction is 7-phospho-2-dehydro-3-deoxy-D-arabino-heptonate = 3-dehydroquinate + phosphate. Its pathway is metabolic intermediate biosynthesis; chorismate biosynthesis; chorismate from D-erythrose 4-phosphate and phosphoenolpyruvate: step 2/7. In terms of biological role, catalyzes the conversion of 3-deoxy-D-arabino-heptulosonate 7-phosphate (DAHP) to dehydroquinate (DHQ). The polypeptide is 3-dehydroquinate synthase (Pseudomonas entomophila (strain L48)).